Consider the following 394-residue polypeptide: Quinolinate synthase (394 aa).

His67 and Ser84 together coordinate iminosuccinate. Position 131 (Cys131) interacts with [4Fe-4S] cluster. Iminosuccinate is bound by residues 163 to 165 and Ser184; that span reads YMN. Cys254 serves as a coordination point for [4Fe-4S] cluster. Residues 280 to 282 and Thr297 each bind iminosuccinate; that span reads HPE. Cys346 contacts [4Fe-4S] cluster.

Belongs to the quinolinate synthase family. Type 3 subfamily. Requires [4Fe-4S] cluster as cofactor.

The protein localises to the cytoplasm. The enzyme catalyses iminosuccinate + dihydroxyacetone phosphate = quinolinate + phosphate + 2 H2O + H(+). It participates in cofactor biosynthesis; NAD(+) biosynthesis; quinolinate from iminoaspartate: step 1/1. In terms of biological role, catalyzes the condensation of iminoaspartate with dihydroxyacetone phosphate to form quinolinate. In Streptomyces coelicolor (strain ATCC BAA-471 / A3(2) / M145), this protein is Quinolinate synthase.